A 163-amino-acid chain; its full sequence is Periplasmic nitrate reductase, electron transfer subunit (163 aa).

The first 32 residues, 1-32 (MRSQDPSRRLSRRLWTLFALALCLVTGTVALA), serve as a signal peptide directing secretion. Positions 76, 90, 93, 94, 111, 130, 133, and 134 each coordinate heme c.

The protein belongs to the NapB family. In terms of assembly, component of the periplasmic nitrate reductase NapAB complex composed of NapA and NapB. Post-translationally, binds 2 heme C groups per subunit.

The protein localises to the periplasm. Electron transfer subunit of the periplasmic nitrate reductase complex NapAB. Receives electrons from the membrane-anchored tetraheme c-type NapC protein and transfers these to NapA subunit, thus allowing electron flow between membrane and periplasm. Essential for periplasmic nitrate reduction with nitrate as the terminal electron acceptor. This is Periplasmic nitrate reductase, electron transfer subunit from Neorhizobium galegae (Rhizobium galegae).